Consider the following 132-residue polypeptide: L-ectoine synthase (132 aa).

Belongs to the ectoine synthase family.

It carries out the reaction (2S)-4-acetamido-2-aminobutanoate = L-ectoine + H2O. Its pathway is amine and polyamine biosynthesis; ectoine biosynthesis; L-ectoine from L-aspartate 4-semialdehyde: step 3/3. Catalyzes the circularization of gamma-N-acetyl-alpha,gamma-diaminobutyric acid (ADABA) to ectoine (1,4,5,6-tetrahydro-2-methyl-4-pyrimidine carboxylic acid), which is an excellent osmoprotectant. This Teredinibacter turnerae (strain ATCC 39867 / T7901) protein is L-ectoine synthase.